The following is a 142-amino-acid chain: Transcription antitermination protein NusB (142 aa).

It belongs to the NusB family.

In terms of biological role, involved in transcription antitermination. Required for transcription of ribosomal RNA (rRNA) genes. Binds specifically to the boxA antiterminator sequence of the ribosomal RNA (rrn) operons. This Thermobifida fusca (strain YX) protein is Transcription antitermination protein NusB.